The chain runs to 305 residues: Type II secretion system protein C (305 aa).

Over M1 to E29 the chain is Cytoplasmic. A helical transmembrane segment spans residues G30–V50. Topologically, residues S51 to F305 are periplasmic.

Belongs to the GSP C family.

Its subcellular location is the cell inner membrane. Involved in a type II secretion system (T2SS, formerly general secretion pathway, GSP) for the export of proteins. Required for secretion of cholera toxin through the outer membrane. The polypeptide is Type II secretion system protein C (epsC) (Vibrio cholerae serotype O1 (strain ATCC 39315 / El Tor Inaba N16961)).